A 207-amino-acid chain; its full sequence is Glutathione S-transferase 4 (207 aa).

A GST N-terminal domain is found at 2 to 79; sequence PNYKLLYFDA…YLARKFGLAG (78 aa). Glutathione is bound by residues Tyr-8, Trp-39, Lys-43, 49–51, and 63–64; these read GQL and QS. One can recognise a GST C-terminal domain in the interval 81–207; the sequence is TAEEEAYADS…YVATRKDSIV (127 aa).

This sequence belongs to the GST superfamily. Sigma family.

The catalysed reaction is RX + glutathione = an S-substituted glutathione + a halide anion + H(+). Functionally, conjugation of reduced glutathione to a wide number of exogenous and endogenous hydrophobic electrophiles. May play a role in the detoxification of reactive oxygen species produced during pathogenic bacterial infection. The polypeptide is Glutathione S-transferase 4 (Caenorhabditis elegans).